The following is a 330-amino-acid chain: Ferredoxin--NADP reductase (330 aa).

Positions 19, 38, 46, 51, 91, 129, 286, and 327 each coordinate FAD.

It belongs to the ferredoxin--NADP reductase type 2 family. Homodimer. FAD serves as cofactor.

It catalyses the reaction 2 reduced [2Fe-2S]-[ferredoxin] + NADP(+) + H(+) = 2 oxidized [2Fe-2S]-[ferredoxin] + NADPH. The polypeptide is Ferredoxin--NADP reductase (Nocardioides sp. (strain ATCC BAA-499 / JS614)).